We begin with the raw amino-acid sequence, 316 residues long: Ornithine carbamoyltransferase (316 aa).

Carbamoyl phosphate is bound by residues 57-60 (STRT), Gln84, Arg108, and 135-138 (HPCQ). Residues Asn166, Asp230, and 234–235 (SM) each bind L-ornithine. Carbamoyl phosphate is bound by residues 269-270 (CL) and Arg297.

This sequence belongs to the aspartate/ornithine carbamoyltransferase superfamily. OTCase family.

The protein resides in the cytoplasm. The enzyme catalyses carbamoyl phosphate + L-ornithine = L-citrulline + phosphate + H(+). Its pathway is amino-acid biosynthesis; L-arginine biosynthesis; L-arginine from L-ornithine and carbamoyl phosphate: step 1/3. Functionally, reversibly catalyzes the transfer of the carbamoyl group from carbamoyl phosphate (CP) to the N(epsilon) atom of ornithine (ORN) to produce L-citrulline. The sequence is that of Ornithine carbamoyltransferase from Bacillus thuringiensis subsp. konkukian (strain 97-27).